The primary structure comprises 101 residues: Urease subunit beta (101 aa).

The protein belongs to the urease beta subunit family. In terms of assembly, heterotrimer of UreA (gamma), UreB (beta) and UreC (alpha) subunits. Three heterotrimers associate to form the active enzyme.

It localises to the cytoplasm. It carries out the reaction urea + 2 H2O + H(+) = hydrogencarbonate + 2 NH4(+). It functions in the pathway nitrogen metabolism; urea degradation; CO(2) and NH(3) from urea (urease route): step 1/1. In Burkholderia pseudomallei (strain 668), this protein is Urease subunit beta.